Consider the following 509-residue polypeptide: Type II methyltransferase M.BsoBI (509 aa).

It belongs to the N(4)/N(6)-methyltransferase family. N(4) subfamily.

The catalysed reaction is a 2'-deoxycytidine in DNA + S-adenosyl-L-methionine = an N(4)-methyl-2'-deoxycytidine in DNA + S-adenosyl-L-homocysteine + H(+). An alpha subtype methylase that recognizes the double-stranded sequence 5'-CYCGRG-3', methylates C-1 on both strands, and protects the DNA from cleavage by the BsoBI endonuclease. The chain is Type II methyltransferase M.BsoBI from Geobacillus stearothermophilus (Bacillus stearothermophilus).